We begin with the raw amino-acid sequence, 81 residues long: Cytotoxin 4 (81 aa).

Residues 1 to 21 (MKTLLLTLVVVTIVCLDLGYT) form the signal peptide. Intrachain disulfides connect Cys24/Cys42, Cys35/Cys59, Cys63/Cys74, and Cys75/Cys80.

It belongs to the three-finger toxin family. Short-chain subfamily. Type IA cytotoxin sub-subfamily. As to quaternary structure, monomer in solution; Homodimer and oligomer in the presence of negatively charged lipids forming a pore with a size ranging between 20 and 30 Angstroms. As to expression, expressed by the venom gland.

It localises to the secreted. Its subcellular location is the target cell membrane. Basic protein that bind to cell membrane and depolarizes cardiomyocytes. This cytotoxin also shows lytic activities, but 2-fold more important than that of CTX-A2. It binds to the integrin alpha-V/beta-3 with a moderate affinity. Inhibits protein kinase C. It may interact with sulfatides in the cell membrane, which induces pore formation and cell internalization and is responsible for cytotoxicity in cardiomyocytes. It may also target the mitochondrial membrane and induces mitochondrial swelling and fragmentation. The sequence is that of Cytotoxin 4 from Naja atra (Chinese cobra).